The primary structure comprises 213 residues: Large ribosomal subunit protein uL1 (213 aa).

This sequence belongs to the universal ribosomal protein uL1 family.

The chain is Large ribosomal subunit protein uL1 (RPL10A) from Chlamydomonas reinhardtii (Chlamydomonas smithii).